The primary structure comprises 782 residues: Endonuclease MutS2 (782 aa).

ATP is bound at residue glycine 336–threonine 343. One can recognise a Smr domain in the interval leucine 707 to lysine 782.

It belongs to the DNA mismatch repair MutS family. MutS2 subfamily. Homodimer. Binds to stalled ribosomes, contacting rRNA.

Endonuclease that is involved in the suppression of homologous recombination and thus may have a key role in the control of bacterial genetic diversity. Its function is as follows. Acts as a ribosome collision sensor, splitting the ribosome into its 2 subunits. Detects stalled/collided 70S ribosomes which it binds and splits by an ATP-hydrolysis driven conformational change. Acts upstream of the ribosome quality control system (RQC), a ribosome-associated complex that mediates the extraction of incompletely synthesized nascent chains from stalled ribosomes and their subsequent degradation. Probably generates substrates for RQC. This chain is Endonuclease MutS2, found in Staphylococcus epidermidis (strain ATCC 35984 / DSM 28319 / BCRC 17069 / CCUG 31568 / BM 3577 / RP62A).